The primary structure comprises 269 residues: MAKEGGLGENSRWSLGGMTALVTGGSKGIGEAVVEELAMLGAKVHTCARDETQLQERLREWQAKGFQVTTSVCDVSSRDQRVKLMETVSSLYQGKLNILVNNVGTSIFKPTTEYTAEDFSFVMATNLESAFHLSQLAHPLLKASGSGSIVLISSAAGVVHVNVGSIYGATKGAMNQLARNLACEWASDNIRTNSVCPWYITTPLSNDFFDEEFKKEAVRTTPMGRVGEANEVSPLVAFLCLPSASYITGQTICVDGGATVNGFSFKTMP.

An NADP(+)-binding site is contributed by 21-45 (LVTGGSKGIGEAVVEELAMLGAKVH). Position 154 (Ser154) interacts with substrate. Tyr167 (proton acceptor) is an active-site residue.

This sequence belongs to the short-chain dehydrogenases/reductases (SDR) family. SDR65C subfamily.

Unspecific reductase providing both diastereomeric alcohols from the prochiral ketones. Active on cyclic monoterpenes and small flexible lipophilic carbonyls. No activity with tropinone, nitrogen-containing tropinone analogs, tropine or pseudotropine as substrate. The sequence is that of Senescence-associated protein 13 from Arabidopsis thaliana (Mouse-ear cress).